A 420-amino-acid chain; its full sequence is Gamma-glutamyl phosphate reductase (420 aa).

This sequence belongs to the gamma-glutamyl phosphate reductase family.

The protein localises to the cytoplasm. The enzyme catalyses L-glutamate 5-semialdehyde + phosphate + NADP(+) = L-glutamyl 5-phosphate + NADPH + H(+). Its pathway is amino-acid biosynthesis; L-proline biosynthesis; L-glutamate 5-semialdehyde from L-glutamate: step 2/2. Its function is as follows. Catalyzes the NADPH-dependent reduction of L-glutamate 5-phosphate into L-glutamate 5-semialdehyde and phosphate. The product spontaneously undergoes cyclization to form 1-pyrroline-5-carboxylate. The protein is Gamma-glutamyl phosphate reductase of Neisseria meningitidis serogroup A / serotype 4A (strain DSM 15465 / Z2491).